Here is a 546-residue protein sequence, read N- to C-terminus: Chaperonin GroEL 2 (546 aa).

ATP-binding positions include 30 to 33 (TLGP), Lys51, 87 to 91 (DGTTT), Gly415, and Asp496.

Belongs to the chaperonin (HSP60) family. In terms of assembly, forms a cylinder of 14 subunits composed of two heptameric rings stacked back-to-back. Interacts with the co-chaperonin GroES.

It is found in the cytoplasm. It carries out the reaction ATP + H2O + a folded polypeptide = ADP + phosphate + an unfolded polypeptide.. Functionally, together with its co-chaperonin GroES, plays an essential role in assisting protein folding. The GroEL-GroES system forms a nano-cage that allows encapsulation of the non-native substrate proteins and provides a physical environment optimized to promote and accelerate protein folding. The polypeptide is Chaperonin GroEL 2 (Bradyrhizobium sp. (strain ORS 278)).